The primary structure comprises 302 residues: Methionyl-tRNA formyltransferase (302 aa).

(6S)-5,6,7,8-tetrahydrofolate is bound at residue 108 to 111; the sequence is SLLP.

This sequence belongs to the Fmt family.

It catalyses the reaction L-methionyl-tRNA(fMet) + (6R)-10-formyltetrahydrofolate = N-formyl-L-methionyl-tRNA(fMet) + (6S)-5,6,7,8-tetrahydrofolate + H(+). In terms of biological role, attaches a formyl group to the free amino group of methionyl-tRNA(fMet). The formyl group appears to play a dual role in the initiator identity of N-formylmethionyl-tRNA by promoting its recognition by IF2 and preventing the misappropriation of this tRNA by the elongation apparatus. The chain is Methionyl-tRNA formyltransferase from Cereibacter sphaeroides (strain ATCC 17025 / ATH 2.4.3) (Rhodobacter sphaeroides).